A 533-amino-acid chain; its full sequence is Glucosidase 2 subunit beta (533 aa).

The first 13 residues, 1–13 (MLLLLLLLPMCWA), serve as a signal peptide directing secretion. S23 carries the post-translational modification Phosphoserine. LDL-receptor class A domains follow at residues 36 to 70 (FTCLDGSASIPFDQVNDDYCDCKDGSDEPGTAACP) and 71 to 112 (NGSF…IVCE). Cystine bridges form between C38–C57 and C55–C69. D48 is a binding site for substrate. Ca(2+) is bound by residues Q49, D52, Y54, D56, D62, and E63. D52 lines the substrate pocket. Residue N71 is glycosylated (N-linked (GlcNAc...) asparagine). Intrachain disulfides connect C76–C98, C96–C111, and C99–C115. Position 88 is a phosphoserine; by PKC (S88). Ca(2+) is bound by residues D93, V95, D97, D103, and E104. K165 carries the N6-succinyllysine modification. S167 carries the phosphoserine modification. 2 EF-hand domains span residues 208 to 243 (RERELAASAFQELDDDMDGAVSVAELQTHPELDTDG) and 244 to 279 (DGALSEGEAQTLLGGDAQMDAAFFYDRVWAAIRDKY). Ca(2+) contacts are provided by D221, D223, D225, and E232. The segment at 284–363 (LPTEYPPSPP…SPTEEDRMPP (80 aa)) is disordered. Over residues 312–336 (TEEEDEDEEDEETEEDEDEEDEDSQ) the composition is skewed to acidic residues. A phosphoserine; by PKC mark is found at S388 and S395. The 102-residue stretch at 418–519 (SQCYELTTNE…ELMTPAACPE (102 aa)) folds into the MRH domain. Cysteines 420 and 433 form a disulfide. S439 is subject to Phosphoserine; by PKC. 2 disulfide bridges follow: C476-C505 and C490-C517. An N-linked (GlcNAc...) asparagine glycan is attached at N481. The Prevents secretion from ER signature appears at 530-533 (HDEL).

As to quaternary structure, heterodimer of a catalytic alpha subunit (GANAB) and a beta subunit (PRKCSH). Binds glycosylated PTPRC. Ubiquitous. Highly expressed in liver, spleen, lung, duodenum, stomach, adrenal gland, pituitary, testis, corpus luteum, uterus and fetal ovary.

It localises to the endoplasmic reticulum. The protein operates within glycan metabolism; N-glycan metabolism. Regulatory subunit of glucosidase II that cleaves sequentially the 2 innermost alpha-1,3-linked glucose residues from the Glc(2)Man(9)GlcNAc(2) oligosaccharide precursor of immature glycoproteins. Required for efficient PKD1/Polycystin-1 biogenesis and trafficking to the plasma membrane of the primary cilia. The sequence is that of Glucosidase 2 subunit beta (PRKCSH) from Bos taurus (Bovine).